The primary structure comprises 110 residues: Large ribosomal subunit protein uL22 (110 aa).

Belongs to the universal ribosomal protein uL22 family. Part of the 50S ribosomal subunit.

This protein binds specifically to 23S rRNA; its binding is stimulated by other ribosomal proteins, e.g. L4, L17, and L20. It is important during the early stages of 50S assembly. It makes multiple contacts with different domains of the 23S rRNA in the assembled 50S subunit and ribosome. In terms of biological role, the globular domain of the protein is located near the polypeptide exit tunnel on the outside of the subunit, while an extended beta-hairpin is found that lines the wall of the exit tunnel in the center of the 70S ribosome. The chain is Large ribosomal subunit protein uL22 from Ruthia magnifica subsp. Calyptogena magnifica.